Reading from the N-terminus, the 632-residue chain is tRNA uridine 5-carboxymethylaminomethyl modification enzyme MnmG (632 aa).

FAD contacts are provided by residues 15–20 (GAGHAG), Ile127, and Ser182. Position 276-290 (276-290 (GPRYCPSIEDKIVRF)) interacts with NAD(+). Gln373 is an FAD binding site.

Belongs to the MnmG family. In terms of assembly, homodimer. Heterotetramer of two MnmE and two MnmG subunits. The cofactor is FAD.

Its subcellular location is the cytoplasm. In terms of biological role, NAD-binding protein involved in the addition of a carboxymethylaminomethyl (cmnm) group at the wobble position (U34) of certain tRNAs, forming tRNA-cmnm(5)s(2)U34. In Streptococcus pyogenes serotype M28 (strain MGAS6180), this protein is tRNA uridine 5-carboxymethylaminomethyl modification enzyme MnmG.